Reading from the N-terminus, the 386-residue chain is tRNA-specific adenosine deaminase subunit tad2 (386 aa).

The region spanning 212–322 (TQHETYMKLA…GNDRFGGCGS (111 aa)) is the CMP/dCMP-type deaminase domain. Zn(2+) is bound at residue H263. The Proton donor role is filled by E265. Zn(2+) contacts are provided by C293 and C296.

The protein belongs to the cytidine and deoxycytidylate deaminase family. ADAT2 subfamily. Heterodimer with Tad3. The cofactor is Zn(2+).

It catalyses the reaction adenosine(34) in tRNA + H2O + H(+) = inosine(34) in tRNA + NH4(+). In terms of biological role, structural subunit of tRNA-specific adenosine deaminase, which deaminates adenosine-34 (the first, also called wobble position of the anticodon) to inosine in many tRNAs. Inosine-34 allows the decoding of 3 different nucleotides at the third position of mRNA codons, as inosine is able to pair with U, C, and A. The wobble inosine tRNA modification is essential for cell cycle progression in the G1/S and G2/M transitions in fission yeast. In Schizosaccharomyces pombe (strain 972 / ATCC 24843) (Fission yeast), this protein is tRNA-specific adenosine deaminase subunit tad2 (tad2).